Here is a 120-residue protein sequence, read N- to C-terminus: ATP-dependent Clp protease adapter protein ClpS (120 aa).

Belongs to the ClpS family. Binds to the N-terminal domain of the chaperone ClpA.

Its function is as follows. Involved in the modulation of the specificity of the ClpAP-mediated ATP-dependent protein degradation. This is ATP-dependent Clp protease adapter protein ClpS from Azotobacter vinelandii (strain DJ / ATCC BAA-1303).